The primary structure comprises 400 residues: Hyaluronan and proteoglycan link protein 4 (400 aa).

The first 30 residues, 1–30 (MACAPGALGHRALWAVAWGLLLLVPVLAGA), serve as a signal peptide directing secretion. Residues 47-155 (SVVVQTAPGQ…VTNELEDDVG (109 aa)) enclose the Ig-like C2-type domain. Disulfide bonds link cysteine 69–cysteine 144, cysteine 186–cysteine 264, cysteine 210–cysteine 231, cysteine 291–cysteine 361, and cysteine 316–cysteine 337. N-linked (GlcNAc...) asparagine glycosylation is present at asparagine 133. 2 Link domains span residues 164–266 (VVFP…FCFT) and 271–363 (GRVF…YCYR).

The protein belongs to the HAPLN family. Expressed predominantly in brain where it is found mainly throughout the midbrain and hindbrain in a perineuronal net pattern.

Its subcellular location is the secreted. The protein resides in the extracellular space. It is found in the extracellular matrix. Its function is as follows. Essential for the proper localization of brevican (BCAN), mainly as a perineuronal nets (PNNs)-type deposition in the brainstem and cerebellum thereby playing a key role in the formation and structural organization of PNNs. Contributes to the formation and transmission of inhibitory GABAergic synapses between Purkinje cells and deep cerebellar nuclei neurons. The polypeptide is Hyaluronan and proteoglycan link protein 4 (Hapln4) (Mus musculus (Mouse)).